Reading from the N-terminus, the 453-residue chain is MTVETGIVVGASVSHSHASIDQIETAADGSQQTAVEELLSKEGVSEAFVLQTCNRAEAYVVANDSETGTAALAGYLAGVDDDAIRMLSHNQSLKHLMAVACGLESLVIGEDQILGQVRDAYEDARGVGGVGPTLNDAVLKALHVGERARTETAINEGAVSLGSAAVRFAAERHGVTGSTALVVGAGEMATLAAKALDDPASRVIVANRTRERAERLAEELSTTASVVGVDSVDEAADAADVVVSATGSEDYVIDTADLGGVGETCVLDIAQPRDVAPGADGIDGVAVYDLDTIESVTDEARAKRREAAETVETMIDEEFEHLMTQYKRKRADQVIAAMYEGAERIKARELRTAVSKFEAEREDGLSEREHEIVESMADALVGQLLSAPTQSLRDAAEEDDWATINAALQLFGPGLEPEPTELPTVPDGPEGVPEELRERMSSGMLEQFSTNDD.

Residues 52 to 55 (TCNR), S105, 110 to 112 (EDQ), and Q116 each bind substrate. C53 acts as the Nucleophile in catalysis. An NADP(+)-binding site is contributed by 184 to 189 (GAGEMA). Low complexity predominate over residues 413–424 (PGLEPEPTELPT). A disordered region spans residues 413–453 (PGLEPEPTELPTVPDGPEGVPEELRERMSSGMLEQFSTNDD).

It belongs to the glutamyl-tRNA reductase family. Homodimer.

The enzyme catalyses (S)-4-amino-5-oxopentanoate + tRNA(Glu) + NADP(+) = L-glutamyl-tRNA(Glu) + NADPH + H(+). It functions in the pathway porphyrin-containing compound metabolism; protoporphyrin-IX biosynthesis; 5-aminolevulinate from L-glutamyl-tRNA(Glu): step 1/2. Functionally, catalyzes the NADPH-dependent reduction of glutamyl-tRNA(Glu) to glutamate 1-semialdehyde (GSA). The sequence is that of Glutamyl-tRNA reductase from Natronomonas pharaonis (strain ATCC 35678 / DSM 2160 / CIP 103997 / JCM 8858 / NBRC 14720 / NCIMB 2260 / Gabara) (Halobacterium pharaonis).